The sequence spans 428 residues: GTPase Obg (428 aa).

Positions 1 to 158 constitute an Obg domain; it reads MFVDQVKVYV…RYIVLELKVL (158 aa). The tract at residues 117 to 143 is disordered; it reads ARGGRGGRGNSRFATPANPAPQLSENG. The OBG-type G domain occupies 159–329; sequence ADVGLVGFPS…LLFEVANQLE (171 aa). GTP-binding positions include 165-172, 190-194, 212-215, 282-285, and 310-312; these read GFPSVGKS, FTTLV, DLPG, NKMD, and SAV. Mg(2+) contacts are provided by Ser172 and Thr192. The region spanning 350 to 428 is the OCT domain; it reads TMENEEVPFN…LLEFEFEFID (79 aa).

The protein belongs to the TRAFAC class OBG-HflX-like GTPase superfamily. OBG GTPase family. Monomer. Interacts with TasA (AC P54507) in pull-down experiments. The cofactor is Mg(2+).

It localises to the cytoplasm. With respect to regulation, inhibited by GDP; less than 20 uM ppGpp stimulates the GTPase, while higher concentrations inhibit. Necessary for the transition from vegetative growth to stage 0 or stage II of sporulation, but sporulation subsequent to these stages is unaffected at 45 degrees Celsius. This ts effect is probably due solely to the E-79 mutation. Required for expression of early sporulation genes, further suggesting a role in the induction of sporulation. Depletion effects on sporulation can be partially suppressed by missense mutations in spo0A. Strains depleted for obg stop growing after about 3 hours and do not induce the sigma-B factor following ethanol stress. It cofractionates with the ribosome and upstream stress response regulators RsbR, RsbS and RsbT in size fractionation columns, suggesting the ribosome might serve as a possible mediator of the activity of obg and the stress induction of sigma-B. In glycerol gradients partially associates with ribosomes; this is stabilized by a nonhydrolyzable GTP-analog and to a lesser extent GTP and GDP. In terms of biological role, an essential GTPase which binds GTP, GDP and possibly (p)ppGpp with moderate affinity, with high nucleotide exchange rates and a fairly low GTP hydrolysis rate. Plays a role in control of the cell cycle, stress response, ribosome biogenesis and in those bacteria that undergo differentiation, in morphogenesis control. In Bacillus subtilis (strain 168), this protein is GTPase Obg.